Consider the following 230-residue polypeptide: 2-C-methyl-D-erythritol 4-phosphate cytidylyltransferase (230 aa).

Belongs to the IspD/TarI cytidylyltransferase family. IspD subfamily.

It carries out the reaction 2-C-methyl-D-erythritol 4-phosphate + CTP + H(+) = 4-CDP-2-C-methyl-D-erythritol + diphosphate. The protein operates within isoprenoid biosynthesis; isopentenyl diphosphate biosynthesis via DXP pathway; isopentenyl diphosphate from 1-deoxy-D-xylulose 5-phosphate: step 2/6. Catalyzes the formation of 4-diphosphocytidyl-2-C-methyl-D-erythritol from CTP and 2-C-methyl-D-erythritol 4-phosphate (MEP). The sequence is that of 2-C-methyl-D-erythritol 4-phosphate cytidylyltransferase from Nocardia farcinica (strain IFM 10152).